Reading from the N-terminus, the 45-residue chain is Photosystem II reaction center protein K (45 aa).

The propeptide occupies Met-1–Ala-8. The chain crosses the membrane as a helical span at residues Leu-24–Phe-44.

It belongs to the PsbK family. As to quaternary structure, PSII is composed of 1 copy each of membrane proteins PsbA, PsbB, PsbC, PsbD, PsbE, PsbF, PsbH, PsbI, PsbJ, PsbK, PsbL, PsbM, PsbT, PsbX, PsbY, PsbZ, Psb30/Ycf12, peripheral proteins PsbO, CyanoQ (PsbQ), PsbU, PsbV and a large number of cofactors. It forms dimeric complexes.

It localises to the cellular thylakoid membrane. Functionally, one of the components of the core complex of photosystem II (PSII). PSII is a light-driven water:plastoquinone oxidoreductase that uses light energy to abstract electrons from H(2)O, generating O(2) and a proton gradient subsequently used for ATP formation. It consists of a core antenna complex that captures photons, and an electron transfer chain that converts photonic excitation into a charge separation. This Trichodesmium erythraeum (strain IMS101) protein is Photosystem II reaction center protein K.